A 2559-amino-acid chain; its full sequence is Ubiquitin carboxyl-terminal hydrolase 9X (2559 aa).

A compositionally biased stretch (polar residues) spans 1–44; that stretch reads MTATTRGSPVGGNDNQGQAPDGQSQPPLQQNQTSSPDSSNENSP. The tract at residues 1–64 is disordered; that stretch reads MTATTRGSPV…DAPPQIEDEE (64 aa). Phosphoserine is present on residues Ser374, Ser375, and Ser588. The tract at residues 967–999 is disordered; the sequence is QISSNMPSSPDSSSDSSTGSPGNHGNHYSDGPN. Residues 969 to 989 are compositionally biased toward low complexity; it reads SSNMPSSPDSSSDSSTGSPGN. The USP domain maps to 1557 to 1956; that stretch reads VGLKNAGATC…NAYILFYERM (400 aa). The Nucleophile role is filled by Cys1566. A disordered region spans residues 1592–1633; the sequence is GSDVDDDMSGDEKQDNESNVDPRDDVFGYPQQFEDKPPLSKT. A Phosphoserine modification is found at Ser1600. Composition is skewed to basic and acidic residues over residues 1601–1617 and 1624–1633; these read GDEK…RDDV and FEDKPPLSKT. Cys1727, His1729, Cys1771, and Cys1774 together coordinate Zn(2+). His1879 (proton acceptor) is an active-site residue. A Phosphoserine modification is found at Ser2443. Positions 2475-2484 are enriched in acidic residues; it reads PEEEPDDQDA. Residues 2475–2559 are disordered; sequence PEEEPDDQDA…QTKGSVKCTY (85 aa). Composition is skewed to polar residues over residues 2503-2513 and 2527-2537; these read PGSQYQQNNHV and NNPQRTGQRAQ. At Tyr2540 the chain carries Phosphotyrosine. The residue at position 2547 (Ser2547) is a Phosphoserine. A Phosphothreonine modification is found at Thr2551.

Belongs to the peptidase C19 family. In terms of assembly, interacts with SMAD4, MARK4, NUAK1 and BIRC5/survivin. Interacts with DCX. Interacts with OTUD4 and USP7; the interaction is direct. Highest levels in liver and brain with expression also detected in heart, muscle, spleen and kidney (at protein leve). Ubiquitously expressed in adult tissues.

It localises to the cytoplasm. The protein resides in the cytosol. The protein localises to the cell projection. It is found in the growth cone. Its subcellular location is the cytoskeleton. It localises to the cilium axoneme. The catalysed reaction is Thiol-dependent hydrolysis of ester, thioester, amide, peptide and isopeptide bonds formed by the C-terminal Gly of ubiquitin (a 76-residue protein attached to proteins as an intracellular targeting signal).. Functionally, deubiquitinase involved both in the processing of ubiquitin precursors and of ubiquitinated proteins. May therefore play an important regulatory role at the level of protein turnover by preventing degradation of proteins through the removal of conjugated ubiquitin. Specifically hydrolyzes 'Lys-11'-, followed by 'Lys-63'-, 'Lys-48'- and 'Lys-6'-linked polyubiquitins chains. Essential component of TGF-beta/BMP signaling cascade. Specifically deubiquitinates monoubiquitinated SMAD4, opposing the activity of E3 ubiquitin-protein ligase TRIM33. Deubiquitinates alkylation repair enzyme ALKBH3. OTUD4 recruits USP7 and USP9X to stabilize ALKBH3, thereby promoting the repair of alkylated DNA lesions. Deubiquitinates RNA demethylase enzyme ALKBH5, promoting its stability. Deubiquitinates mTORC2 complex component RICTOR at 'Lys-294' by removing 'Lys-63'-linked polyubiquitin chains, stabilizing RICTOR and enhancing its binding to MTOR, thus promoting mTORC2 complex assembly. Regulates chromosome alignment and segregation in mitosis by regulating the localization of BIRC5/survivin to mitotic centromeres. Involved in axonal growth and neuronal cell migration. Regulates cellular clock function by enhancing the protein stability and transcriptional activity of the core circadian protein BMAL1 via its deubiquitinating activity. Acts as a regulator of peroxisome import by mediating deubiquitination of PEX5: specifically deubiquitinates PEX5 monoubiquitinated at 'Cys-11' following its retrotranslocation into the cytosol, resetting PEX5 for a subsequent import cycle. Deubiquitinates PEG10. Inhibits the activation of the Hippo signaling pathway via deubiquitination of AMOTL2 at 'Lys-337' and 'Lys-404' which prohibits its interaction with and activation of LATS2. Loss of LATS2 activation and subsequent loss of YAP1 phosphorylation results in an increase in YAP1-driven transcription of target genes. In Mus musculus (Mouse), this protein is Ubiquitin carboxyl-terminal hydrolase 9X.